We begin with the raw amino-acid sequence, 193 residues long: Mesogenin-1 (193 aa).

Residues 34-59 (GPFELNQASPSQSLSPAPSLESYSSS) are disordered. Positions 40–59 (QASPSQSLSPAPSLESYSSS) are enriched in low complexity. Residues 124-178 (QRRRKASEREKLRMRTLADALHTLRNYLPPVYSQRGQPLTKIQTLKYTIKYIGEL) enclose the bHLH domain.

It localises to the nucleus. Functionally, involved in specifying the paraxial, but not dorsal, mesoderm. May regulate the expression of T-box transcription factors required for mesoderm formation and differentiation. The polypeptide is Mesogenin-1 (MSGN1) (Homo sapiens (Human)).